A 417-amino-acid polypeptide reads, in one-letter code: NADH-quinone oxidoreductase subunit D (417 aa).

The protein belongs to the complex I 49 kDa subunit family. NDH-1 is composed of 14 different subunits. Subunits NuoB, C, D, E, F, and G constitute the peripheral sector of the complex.

The protein localises to the cell inner membrane. The catalysed reaction is a quinone + NADH + 5 H(+)(in) = a quinol + NAD(+) + 4 H(+)(out). In terms of biological role, NDH-1 shuttles electrons from NADH, via FMN and iron-sulfur (Fe-S) centers, to quinones in the respiratory chain. The immediate electron acceptor for the enzyme in this species is believed to be ubiquinone. Couples the redox reaction to proton translocation (for every two electrons transferred, four hydrogen ions are translocated across the cytoplasmic membrane), and thus conserves the redox energy in a proton gradient. The protein is NADH-quinone oxidoreductase subunit D of Dechloromonas aromatica (strain RCB).